A 288-amino-acid polypeptide reads, in one-letter code: Shikimate kinase (288 aa).

Position 81–91 (81–91) interacts with ATP; the sequence is PVASGLKSSSA.

The protein belongs to the GHMP kinase family. Archaeal shikimate kinase subfamily.

It is found in the cytoplasm. It catalyses the reaction shikimate + ATP = 3-phosphoshikimate + ADP + H(+). The protein operates within metabolic intermediate biosynthesis; chorismate biosynthesis; chorismate from D-erythrose 4-phosphate and phosphoenolpyruvate: step 5/7. This is Shikimate kinase from Methanothrix thermoacetophila (strain DSM 6194 / JCM 14653 / NBRC 101360 / PT) (Methanosaeta thermophila).